A 2856-amino-acid chain; its full sequence is Lipopolysaccharide-responsive and beige-like anchor protein (2856 aa).

Disordered regions lie at residues 1–35 and 939–1107; these read MASE…ALSL and EQRK…DDDY. N-acetylalanine is present on Ala-2. Ser-10, Ser-979, and Ser-1003 each carry phosphoserine. Residues 991-1009 are compositionally biased toward polar residues; that stretch reads ENSSIGRASSIDSASNTEL. Residues 1010–1026 are compositionally biased toward basic and acidic residues; the sequence is QTHDMSSDEKKVERENQ. Residues 1073-1082 show a composition bias toward low complexity; it reads SEVSASISSP. A phosphoserine mark is found at Ser-1097, Ser-1132, Ser-1136, Ser-1219, Ser-1221, Ser-1228, Ser-1244, and Ser-1258. Residues 1253–1296 are disordered; that stretch reads FELKASTSTEAPQPQRHGLEISRQQEQTAQGTAPDAVDQQRRDS. Positions 1274–1283 are enriched in polar residues; that stretch reads SRQQEQTAQG. The WD 1 repeat unit spans residues 1298 to 1340; the sequence is STMFRIPEFKWSQMHQRLLTDLLFSIETDIQMWRSHSTKTVMD. 2 positions are modified to phosphoserine: Ser-1487 and Ser-1497. A helical membrane pass occupies residues 1529 to 1545; the sequence is AQFLALAVVYFISVLMV. 2 disordered regions span residues 1556-1621 and 1750-1778; these read DERH…LGSG and SAVS…SPKC. The segment covering 1563–1573 has biased composition (polar residues); it reads LKETSSDNGNA. Over residues 1586–1601 the composition is skewed to low complexity; that stretch reads SSLTLSSVEESLEGTS. Ser-1608, Ser-1770, Ser-1773, and Ser-2057 each carry phosphoserine. The BEACH-type PH domain occupies 2066 to 2174; sequence NLAGPVSLST…TVKKVVNYLP (109 aa). Residues 2193–2482 enclose the BEACH domain; that stretch reads ATPRQLFKAS…QLLIEPHPPR (290 aa). Residue Ser-2489 is modified to Phosphoserine. WD repeat units follow at residues 2584–2626, 2629–2672, 2688–2728, 2770–2809, and 2812–2851; these read DQSI…LIQV, GHWD…SGIG, GHDY…RTLE, ETDD…QLFA, and GCDA…WHHE.

Interacts with TOM1 and TOLLIP. Isoform 1 is expressed in the brain, is absent from the lung and the bone marrow and is less abundant in the spleen. Isoform 2 is expressed in the spleen, lung, brain and bone marrow. Isoform 3 is expressed in the brain, is absent from the bone marrow and is less abundant in the spleen and lung.

It localises to the cell membrane. The protein resides in the endoplasmic reticulum membrane. The protein localises to the golgi apparatus. Its subcellular location is the trans-Golgi network membrane. It is found in the lysosome membrane. In terms of biological role, involved in coupling signal transduction and vesicle trafficking to enable polarized secretion and/or membrane deposition of immune effector molecules. Involved in phagophore growth during mitophagy by regulating ATG9A trafficking to mitochondria. The sequence is that of Lipopolysaccharide-responsive and beige-like anchor protein (Lrba) from Mus musculus (Mouse).